Consider the following 510-residue polypeptide: NEDD8-activating enzyme E1 regulatory subunit (510 aa).

At Ala-2 the chain carries N-acetylalanine. Residues Lys-6 and Lys-317 each carry the N6-acetyllysine modification. Residues 307-320 are interaction with UBA3; that stretch reads DMIADSGKYIKLQN.

It belongs to the ubiquitin-activating E1 family. ULA1 subfamily. As to quaternary structure, heterodimer of UBA3 and NAE1. The complex binds NEDD8 and UBE2M. Binds APP and TP53BP2. Post-translationally, ubiquitinated by TRIP12, leading to its degradation by the proteasome.

The protein resides in the cell membrane. The protein operates within protein modification; protein neddylation. With respect to regulation, binding of TP53BP2 to the regulatory subunit NAE1 decreases neddylation activity. Regulatory subunit of the dimeric UBA3-NAE1 E1 enzyme. E1 activates NEDD8 by first adenylating its C-terminal glycine residue with ATP, thereafter linking this residue to the side chain of the catalytic cysteine, yielding a NEDD8-UBA3 thioester and free AMP. E1 finally transfers NEDD8 to the catalytic cysteine of UBE2M. Necessary for cell cycle progression through the S-M checkpoint. Overexpression of NAE1 causes apoptosis through deregulation of NEDD8 conjugation. The covalent attachment of NEDD8 to target proteins is known as 'neddylation' and the process is involved in the regulation of cell growth, viability and development. In Macaca fascicularis (Crab-eating macaque), this protein is NEDD8-activating enzyme E1 regulatory subunit (NAE1).